Here is a 188-residue protein sequence, read N- to C-terminus: Small ribosomal subunit protein uS7 (188 aa).

The protein belongs to the universal ribosomal protein uS7 family. In terms of assembly, part of the 30S ribosomal subunit.

In terms of biological role, one of the primary rRNA binding proteins, it binds directly to 16S rRNA where it nucleates assembly of the head domain of the 30S subunit. Is located at the subunit interface close to the decoding center. The protein is Small ribosomal subunit protein uS7 of Methanococcus maripaludis (strain DSM 14266 / JCM 13030 / NBRC 101832 / S2 / LL).